A 561-amino-acid chain; its full sequence is Formate--tetrahydrofolate ligase (561 aa).

66 to 73 is an ATP binding site; that stretch reads TPAGEGKT.

The protein belongs to the formate--tetrahydrofolate ligase family.

The enzyme catalyses (6S)-5,6,7,8-tetrahydrofolate + formate + ATP = (6R)-10-formyltetrahydrofolate + ADP + phosphate. It participates in one-carbon metabolism; tetrahydrofolate interconversion. The protein is Formate--tetrahydrofolate ligase of Methylibium petroleiphilum (strain ATCC BAA-1232 / LMG 22953 / PM1).